The following is a 224-amino-acid chain: Protein HLJ1 (224 aa).

The 70-residue stretch at 18 to 87 folds into the J domain; sequence DKHEFYEILK…RSIYDRIGRD (70 aa). Residues 84 to 93 are compositionally biased toward basic and acidic residues; that stretch reads IGRDPDDRQM. A disordered region spans residues 84-107; that stretch reads IGRDPDDRQMPSRGAASGFRGSAG. S109 carries the phosphoserine modification. A disordered region spans residues 173 to 192; that stretch reads NRGGSPFMRQQPRSRQQQQQ. Residues 181–192 show a composition bias toward low complexity; the sequence is RQQPRSRQQQQQ.

This is Protein HLJ1 (HLJ1) from Saccharomyces cerevisiae (strain ATCC 204508 / S288c) (Baker's yeast).